Reading from the N-terminus, the 641-residue chain is SUMO-activating enzyme subunit 2-A (641 aa).

ATP is bound by residues 24-29, D48, 56-59, K72, 95-96, and 117-122; these read GAGGIG, NLNR, SI, and DNNAAR. 2 residues coordinate Zn(2+): C158 and C161. C173 acts as the Glycyl thioester intermediate in catalysis. Zn(2+)-binding residues include C439 and C442. A disordered region spans residues 546 to 641; it reads GDVPEKGPQK…EEDDDIIALD (96 aa). The segment covering 548-561 has biased composition (basic and acidic residues); the sequence is VPEKGPQKPPEESV. The span at 562-579 shows a compositional bias: polar residues; sequence KNITNGSDDGAQPSTSKA. Acidic residues-rich tracts occupy residues 582 to 594 and 630 to 641; these read QDDVLIVDSDEES and PVEEDDDIIALD.

The protein belongs to the ubiquitin-activating E1 family. As to quaternary structure, heterodimer of sae1 and uba2/sae2. The heterodimer corresponds to the two domains that are encoded on a single polypeptide chain in ubiquitin-activating enzyme E1. Interacts with ube2i.

The protein resides in the nucleus. Its pathway is protein modification; protein sumoylation. Its function is as follows. The heterodimer acts as an E1 ligase for sumo1, sumo2, and sumo3. It mediates ATP-dependent activation of sumo proteins followed by formation of a thioester bond between a sumo protein and a conserved active site cysteine residue on uba2/sae2. The protein is SUMO-activating enzyme subunit 2-A (uba2-a) of Xenopus laevis (African clawed frog).